A 454-amino-acid polypeptide reads, in one-letter code: Bifunctional protein GlmU (454 aa).

The tract at residues 1–226 (MALNVVILAA…AIEVEGANNR (226 aa)) is pyrophosphorylase. UDP-N-acetyl-alpha-D-glucosamine contacts are provided by residues 8–11 (LAAG), Lys-22, Gln-73, 78–79 (GT), 100–102 (YGD), Gly-137, Glu-151, Asn-166, and Asn-224. Asp-102 contributes to the Mg(2+) binding site. Asn-224 provides a ligand contact to Mg(2+). The interval 227 to 247 (VQLAQLERAYQAREAEKLMIA) is linker. An N-acetyltransferase region spans residues 248–454 (GANLRDPSRI…GWQRPVKIKK (207 aa)). Arg-330 and Lys-348 together coordinate UDP-N-acetyl-alpha-D-glucosamine. Residue His-360 is the Proton acceptor of the active site. Residues Tyr-363 and Asn-374 each contribute to the UDP-N-acetyl-alpha-D-glucosamine site. Residues Ala-377, 383-384 (NY), Ser-402, Ala-420, and Arg-437 each bind acetyl-CoA.

It in the N-terminal section; belongs to the N-acetylglucosamine-1-phosphate uridyltransferase family. The protein in the C-terminal section; belongs to the transferase hexapeptide repeat family. As to quaternary structure, homotrimer. It depends on Mg(2+) as a cofactor.

Its subcellular location is the cytoplasm. The catalysed reaction is alpha-D-glucosamine 1-phosphate + acetyl-CoA = N-acetyl-alpha-D-glucosamine 1-phosphate + CoA + H(+). It carries out the reaction N-acetyl-alpha-D-glucosamine 1-phosphate + UTP + H(+) = UDP-N-acetyl-alpha-D-glucosamine + diphosphate. The protein operates within nucleotide-sugar biosynthesis; UDP-N-acetyl-alpha-D-glucosamine biosynthesis; N-acetyl-alpha-D-glucosamine 1-phosphate from alpha-D-glucosamine 6-phosphate (route II): step 2/2. Its pathway is nucleotide-sugar biosynthesis; UDP-N-acetyl-alpha-D-glucosamine biosynthesis; UDP-N-acetyl-alpha-D-glucosamine from N-acetyl-alpha-D-glucosamine 1-phosphate: step 1/1. It functions in the pathway bacterial outer membrane biogenesis; LPS lipid A biosynthesis. Functionally, catalyzes the last two sequential reactions in the de novo biosynthetic pathway for UDP-N-acetylglucosamine (UDP-GlcNAc). The C-terminal domain catalyzes the transfer of acetyl group from acetyl coenzyme A to glucosamine-1-phosphate (GlcN-1-P) to produce N-acetylglucosamine-1-phosphate (GlcNAc-1-P), which is converted into UDP-GlcNAc by the transfer of uridine 5-monophosphate (from uridine 5-triphosphate), a reaction catalyzed by the N-terminal domain. This is Bifunctional protein GlmU from Shewanella sp. (strain ANA-3).